Reading from the N-terminus, the 744-residue chain is FHF complex subunit HOOK-interacting protein 2B (744 aa).

Disordered regions lie at residues 184-213 and 510-530; these read KTAR…LNRD and LDSG…SSDG. Residues 197-213 are compositionally biased toward basic and acidic residues; the sequence is AGYRDKDCPHSDALNRD.

Belongs to the FHIP family. Expressed in colon.

Functionally, able to activate MAPK/ERK and TGFB signaling pathways. May regulate the activity of genes involved in intestinal barrier function and immunoprotective inflammation. May play a role in cell proliferation. In Mus musculus (Mouse), this protein is FHF complex subunit HOOK-interacting protein 2B.